The sequence spans 335 residues: MYPLARRILFALDAEKAHHFTLDALNMVYKLGLIPVTGNRTKPVKLMGLDLPNPVGLAAGLDKNGEYIDALGALGFGFIEIGTVTPNPQPGNPQPRLFRVPEYQGIINRMGFNNHGIDAMIQNIEKSKFSGVLGINIGKNAVTPIENAADDYLICLEKAYAHASYITVNISSPNTKNLRALQGGDELSALLEALKNKQAQLASVHGKYVPLAVKIAPDLDEAQIEDIAHVVKSVEMDGIIATNTTIDKSSLGSHPLAGEQGGLSGLPVHEKSNRVLKLLADHIDGKLPIIGVGGIMEGRDAAEKIRLGATAVQVYSGLIYKGPALVKECLKALAQ.

Residues 59–63 (AGLDK) and Thr83 contribute to the FMN site. Lys63 contributes to the substrate binding site. 108–112 (NRMGF) provides a ligand contact to substrate. Positions 136 and 169 each coordinate FMN. Asn169 lines the substrate pocket. Ser172 functions as the Nucleophile in the catalytic mechanism. Asn174 contributes to the substrate binding site. 2 residues coordinate FMN: Lys214 and Thr242. 243–244 (NT) is a substrate binding site. Residues Gly265, Gly294, and 315 to 316 (YS) contribute to the FMN site.

This sequence belongs to the dihydroorotate dehydrogenase family. Type 2 subfamily. Monomer. Requires FMN as cofactor.

Its subcellular location is the cell membrane. The enzyme catalyses (S)-dihydroorotate + a quinone = orotate + a quinol. Its pathway is pyrimidine metabolism; UMP biosynthesis via de novo pathway; orotate from (S)-dihydroorotate (quinone route): step 1/1. Catalyzes the conversion of dihydroorotate to orotate with quinone as electron acceptor. The polypeptide is Dihydroorotate dehydrogenase (quinone) (Neisseria meningitidis serogroup C / serotype 2a (strain ATCC 700532 / DSM 15464 / FAM18)).